The primary structure comprises 417 residues: Aminoacyltransferase FemB (417 aa).

Belongs to the FemABX family.

It is found in the cytoplasm. The catalysed reaction is MurNAc-L-Ala-D-isoglutaminyl-L-Lys-(N(6)-tri-Gly)-D-Ala-D-Ala-diphospho-di-trans,octa-cis-undecaprenyl-GlcNAc + 2 glycyl-tRNA(Gly) = MurNAc-L-Ala-D-isoglutaminyl-L-Lys-(N(6)-penta-Gly)-D-Ala-D-Ala-diphospho-di-trans,octa-cis-undecaprenyl-GlcNAc + 2 tRNA(Gly) + 2 H(+). Its function is as follows. Catalyzes the incorporation of amino acid(s) into the interchain peptide bridge of peptidoglycan, using aminoacyl-tRNA as amino acid donor. This Staphylococcus epidermidis protein is Aminoacyltransferase FemB (femB).